Here is a 253-residue protein sequence, read N- to C-terminus: Dihydroanticapsin 7-dehydrogenase (253 aa).

9–31 (LITGGASGIGYAAVQAFLGQQAN) is an NAD(+) binding site. A substrate-binding site is contributed by serine 139. The active-site Proton acceptor is tyrosine 152.

Belongs to the short-chain dehydrogenases/reductases (SDR) family.

The catalysed reaction is L-dihydroanticapsin + NAD(+) = L-anticapsin + NADH + H(+). It participates in antibiotic biosynthesis; bacilysin biosynthesis. Its function is as follows. Part of the bacABCDEFG operon responsible for the biosynthesis of bacilysin, an irreversible inactivator of the glutaminase domain of glucosamine synthetase. Catalyzes the dehydrogenation of the C7-hydroxyl group in the 4S-tetrahydrotyrosine (4S-H4Tyr) to yield anticapsin (epoxycyclohexanonyl-Ala). It is not able to oxidize the 4R-H4Tyr diastereomer and the dihydrobacilysin dipeptide (L-Ala-4S-H4Tyr dipeptide). In Bacillus subtilis (strain 168), this protein is Dihydroanticapsin 7-dehydrogenase.